Consider the following 592-residue polypeptide: V-type ATP synthase alpha chain (592 aa).

An ATP-binding site is contributed by 232–239 (GPFGAGKT).

The protein belongs to the ATPase alpha/beta chains family.

It carries out the reaction ATP + H2O + 4 H(+)(in) = ADP + phosphate + 5 H(+)(out). Its function is as follows. Produces ATP from ADP in the presence of a proton gradient across the membrane. The V-type alpha chain is a catalytic subunit. This chain is V-type ATP synthase alpha chain, found in Clostridium botulinum (strain Alaska E43 / Type E3).